Consider the following 187-residue polypeptide: Elongation factor P (187 aa).

This sequence belongs to the elongation factor P family.

Its subcellular location is the cytoplasm. It participates in protein biosynthesis; polypeptide chain elongation. Involved in peptide bond synthesis. Stimulates efficient translation and peptide-bond synthesis on native or reconstituted 70S ribosomes in vitro. Probably functions indirectly by altering the affinity of the ribosome for aminoacyl-tRNA, thus increasing their reactivity as acceptors for peptidyl transferase. This Leifsonia xyli subsp. xyli (strain CTCB07) protein is Elongation factor P.